A 307-amino-acid polypeptide reads, in one-letter code: MYSMLDTDMKSPVQQSNALSGGPGTPGGKGNTSTPDQDRVKRPMNAFMVWSRGQRRKMAQENPKMHNSEISKRLGADWKLLSDSEKRPFIDEAKRLRAVHMKDYPDYKYRPRRKTKTLLKKDKYSLPGNLLAPGINPVSGGVGQRIDTYPHMNGWTNGAYSLMQEQLGYGQHPAMNSSQMQQIQHRYDMGGLQYSPMMSSAQTYMNAAASTYSMSPAYNQQSSTVMSLASMGSVVKSEPSSPPPAITSHTQRACLGDLRDMISMYLPPGGDAGDHSSLQNSRLHSVHQHYQSAGGPGVNGTVPLTHI.

The segment at 1-43 is disordered; that stretch reads MYSMLDTDMKSPVQQSNALSGGPGTPGGKGNTSTPDQDRVKRP. A compositionally biased stretch (gly residues) spans 21–30; sequence GGPGTPGGKG. The segment at residues 40-108 is a DNA-binding region (HMG box); the sequence is VKRPMNAFMV…VHMKDYPDYK (69 aa). Positions 257–268 match the 9aaTAD motif; the sequence is DLRDMISMYLPP.

Interacts with ctnnb1.

The protein localises to the nucleus. It localises to the cytoplasm. In terms of biological role, transcription factor with sequence-specific DNA binding activity. Binds to the consensus sequence 5'-[AT][AT]CAA[AT]G-3', showing a preference for 5'-AACAAT-3' and 5'-AACAAAG-3'. Inhibits beta-catenin-mediated dorsal axis specification by binding to sites within the promoter of the beta-catenin-regulated gene nodal5. Acts maternally as a transcriptional repressor of nodal5 and nodal6 to restrict their expression to the vegetal hemisphere of early embryos and thus establish germ layer formation. Acts at multiple points to inhibit nodal signaling, repressing the expression of the other mesoderm-inducing nodal genes nodal, nodal2 and nodal4, and also acting downstream to induce expression of genes including trim33/ectodermin, ema and coco, whose products repress nodal signaling. This chain is Transcription factor Sox-3-B (sox3-b), found in Xenopus laevis (African clawed frog).